A 254-amino-acid chain; its full sequence is Type III pantothenate kinase (254 aa).

6–13 (DVGNTNIV) is an ATP binding site. 107–110 (GADR) is a binding site for substrate. The Proton acceptor role is filled by aspartate 109. Aspartate 129 is a binding site for K(+). Threonine 132 lines the ATP pocket. Position 184 (threonine 184) interacts with substrate.

It belongs to the type III pantothenate kinase family. Homodimer. NH4(+) serves as cofactor. K(+) is required as a cofactor.

The protein resides in the cytoplasm. It carries out the reaction (R)-pantothenate + ATP = (R)-4'-phosphopantothenate + ADP + H(+). It functions in the pathway cofactor biosynthesis; coenzyme A biosynthesis; CoA from (R)-pantothenate: step 1/5. Its function is as follows. Catalyzes the phosphorylation of pantothenate (Pan), the first step in CoA biosynthesis. In Exiguobacterium sp. (strain ATCC BAA-1283 / AT1b), this protein is Type III pantothenate kinase.